A 465-amino-acid polypeptide reads, in one-letter code: MGGAVVDEGPTGVKAPDGGWGWAVLFGCFVITGFSYAFPKAVSVFFKELIQEFGIGYSDTAWISSILLAMLYGTGPLCSVCVNRFGCRPVMLVGGLFASLGMVAASFCRSIIQVYLTTGVITGLGLALNFQPSLIMLNRYFSKRRPMANGLAAAGSPVFLCALSPLGQLLQDRYGWRGGFLILGGLLLNCCVCAALMRPLVVTAQPGSGPPRPSRRLLDLSVFRDRGFVLYAVAASVMVLGLFVPPVFVVSYAKDLGVPDTKAAFLLTILGFIDIFARPAAGFVAGLGKVRPYSVYLFSFSMFFNGLADLAGSTAGDYGGLVVFCIFFGISYGMVGALQFEVLMAIVGTHKFSSAIGLVLLMEAVAVLVGPPSGGKLLDATHVYMYVFILAGAEVLTSSLILLLGNFFCIRKKPKEPQPEVAAAEEEKLHKPPADSGVDLREVEHFLKAEPEKNGEVVHTPETSV.

At 2 to 17 (GGAVVDEGPTGVKAPD) the chain is on the cytoplasmic side. A helical membrane pass occupies residues 18–38 (GGWGWAVLFGCFVITGFSYAF). At 39 to 61 (PKAVSVFFKELIQEFGIGYSDTA) the chain is on the extracellular side. Residues 62–82 (WISSILLAMLYGTGPLCSVCV) form a helical membrane-spanning segment. Residues 83-84 (NR) lie on the Cytoplasmic side of the membrane. Residues 85 to 105 (FGCRPVMLVGGLFASLGMVAA) form a helical membrane-spanning segment. Residues 106 to 109 (SFCR) lie on the Extracellular side of the membrane. A helical transmembrane segment spans residues 110–130 (SIIQVYLTTGVITGLGLALNF). At 131–149 (QPSLIMLNRYFSKRRPMAN) the chain is on the cytoplasmic side. Residues 150-170 (GLAAAGSPVFLCALSPLGQLL) form a helical membrane-spanning segment. At 171–179 (QDRYGWRGG) the chain is on the extracellular side. Residues 180 to 200 (FLILGGLLLNCCVCAALMRPL) form a helical membrane-spanning segment. The Cytoplasmic portion of the chain corresponds to 201–227 (VVTAQPGSGPPRPSRRLLDLSVFRDRG). The helical transmembrane segment at 228–248 (FVLYAVAASVMVLGLFVPPVF) threads the bilayer. Over 249-264 (VVSYAKDLGVPDTKAA) the chain is Extracellular. Residues 265–285 (FLLTILGFIDIFARPAAGFVA) form a helical membrane-spanning segment. Residues 286–294 (GLGKVRPYS) lie on the Cytoplasmic side of the membrane. The chain crosses the membrane as a helical span at residues 295–315 (VYLFSFSMFFNGLADLAGSTA). Over 316 to 317 (GD) the chain is Extracellular. A helical transmembrane segment spans residues 318-338 (YGGLVVFCIFFGISYGMVGAL). Residues 339-351 (QFEVLMAIVGTHK) are Cytoplasmic-facing. Residues 352–372 (FSSAIGLVLLMEAVAVLVGPP) traverse the membrane as a helical segment. The Extracellular portion of the chain corresponds to 373-384 (SGGKLLDATHVY). A helical transmembrane segment spans residues 385-405 (MYVFILAGAEVLTSSLILLLG). At 406–465 (NFFCIRKKPKEPQPEVAAAEEEKLHKPPADSGVDLREVEHFLKAEPEKNGEVVHTPETSV) the chain is on the cytoplasmic side. Residues 419 to 438 (PEVAAAEEEKLHKPPADSGV) form a disordered region. 2 basolateral sorting signal regions span residues 423–441 (AAEE…VDLR) and 441–465 (REVE…ETSV). A compositionally biased stretch (basic and acidic residues) spans 425 to 438 (EEEKLHKPPADSGV). The residue at position 436 (Ser436) is a Phosphoserine. The residue at position 460 (Thr460) is a Phosphothreonine. Ser464 bears the Phosphoserine mark.

This sequence belongs to the major facilitator superfamily. Monocarboxylate porter (TC 2.A.1.13) family. In terms of assembly, interacts with BSG; interaction mediates SLC16A3 targeting to the plasma membrane. In terms of tissue distribution, highly expressed in skeletal muscle.

Its subcellular location is the cell membrane. It localises to the basolateral cell membrane. It carries out the reaction (S)-lactate(in) + H(+)(in) = (S)-lactate(out) + H(+)(out). It catalyses the reaction pyruvate(out) + H(+)(out) = pyruvate(in) + H(+)(in). Its function is as follows. Proton-dependent transporter of monocarboxylates such as L-lactate and pyruvate. Plays a predominant role in L-lactate efflux from highly glycolytic cells. The polypeptide is Monocarboxylate transporter 4 (SLC16A3) (Homo sapiens (Human)).